The chain runs to 267 residues: Phosphatidylglycerol--prolipoprotein diacylglyceryl transferase (267 aa).

The next 4 helical transmembrane spans lie at 10–30 (VAIALGPFKVHWYGLMYVVGF), 54–74 (LLFYGALGVVLGGRVGYALFY), 90–110 (WDGGMSFHGGLIGVLIAAWLF), and 116–136 (LAFFQLTDFVAPLVPLGLGAG). Arg137 is an a 1,2-diacyl-sn-glycero-3-phospho-(1'-sn-glycerol) binding site. 3 helical membrane passes run 169–189 (PSPLYEFALEGVVMFVVLWWV), 197–217 (GMISGLFLLLYAVFRFSVEFV), and 231–251 (WLTMGQLLTVPMALAGIALCV).

This sequence belongs to the Lgt family.

It localises to the cell inner membrane. It catalyses the reaction L-cysteinyl-[prolipoprotein] + a 1,2-diacyl-sn-glycero-3-phospho-(1'-sn-glycerol) = an S-1,2-diacyl-sn-glyceryl-L-cysteinyl-[prolipoprotein] + sn-glycerol 1-phosphate + H(+). The protein operates within protein modification; lipoprotein biosynthesis (diacylglyceryl transfer). Functionally, catalyzes the transfer of the diacylglyceryl group from phosphatidylglycerol to the sulfhydryl group of the N-terminal cysteine of a prolipoprotein, the first step in the formation of mature lipoproteins. The polypeptide is Phosphatidylglycerol--prolipoprotein diacylglyceryl transferase (Chromohalobacter salexigens (strain ATCC BAA-138 / DSM 3043 / CIP 106854 / NCIMB 13768 / 1H11)).